A 379-amino-acid polypeptide reads, in one-letter code: Gonadotropin-releasing hormone II receptor (379 aa).

Topologically, residues 1–40 are extracellular; it reads MSAGNGTPWGSAAGEESWAASGVAVEGSELPTFSAAAKVR. Residues 41–60 form a helical membrane-spanning segment; it reads VGVTIVLFVSSAGGNLAVLW. Topologically, residues 61 to 76 are cytoplasmic; it reads SVTRPQPSQLRPSPVR. Residues 77-96 traverse the membrane as a helical segment; that stretch reads TLFAHLAAADLLVTFVVMPL. Topologically, residues 97–114 are extracellular; that stretch reads DATWNITVQWLAEDIACR. Residue asparagine 101 is glycosylated (N-linked (GlcNAc...) asparagine). Cysteine 113 and cysteine 188 form a disulfide bridge. A helical membrane pass occupies residues 115 to 136; it reads TLMFLKLMAMYSAAFLPVVIGL. Over 137-160 the chain is Cytoplasmic; the sequence is DRQAAVLNPLGSRSGVRKLLGAAW. Residues 161 to 178 traverse the membrane as a helical segment; that stretch reads GLSFLLALPQLFLFHTVH. Residues 179 to 204 are Extracellular-facing; the sequence is RAGPVPFTQCVTKGSFKARWQETTYN. The chain crosses the membrane as a helical span at residues 205–224; the sequence is LFTFRCLFLLPLTAMAICYS. The Cytoplasmic portion of the chain corresponds to 225-278; it reads HIVLSVSSPQTRKGSHAPAGEFALCRSFDNCPRVRLWALRLALLILLTFILCWT. Residues 279-297 form a helical membrane-spanning segment; sequence PYYLLGLWYWFSPTMLTEV. The Extracellular portion of the chain corresponds to 298-303; sequence PPSLSH. Residues 304–323 form a helical membrane-spanning segment; that stretch reads ILFLFGLLNAPLDPLLYGAF. Residues 324–379 are Cytoplasmic-facing; sequence TLGCQRGHQELSIDSSNEGSGRMLQQEIHALRQQEVQKTVTSRSAGETKDISITSI.

It belongs to the G-protein coupled receptor 1 family. In terms of processing, phosphorylated on the C-terminal cytoplasmic tail.

It is found in the cell membrane. Its function is as follows. Receptor for gonadotropin releasing hormone II (GnRH II). This receptor mediates its action by association with G proteins that activate a phosphatidylinositol-calcium second messenger system. This chain is Gonadotropin-releasing hormone II receptor (GNRHR2), found in Macaca mulatta (Rhesus macaque).